A 171-amino-acid polypeptide reads, in one-letter code: Sorcin (171 aa).

4 consecutive EF-hand domains span residues 3-38 (MDTN…GLGT), 40-69 (LNIR…LGLF), 70-105 (KYVQ…FGYH), and 106-140 (LSPQ…LQTL). The Ca(2+) site is built by Asp-16, Asp-18, Ser-20, Ser-22, Glu-27, Asp-53, Asp-55, Asn-57, Thr-59, Glu-64, Asp-83, Asp-85, Ser-87, Ser-89, and Glu-94.

The protein localises to the cytoplasm. Its function is as follows. Calcium-binding protein. The polypeptide is Sorcin (Schistosoma japonicum (Blood fluke)).